The following is a 747-amino-acid chain: Potassium transporter 20 (747 aa).

Over Met1–Gln47 the chain is Cytoplasmic. A helical transmembrane segment spans residues Leu48–Tyr68. The Extracellular portion of the chain corresponds to Ser69 to Gly84. Residues Val85 to Val105 form a helical membrane-spanning segment. At Leu106 to Lys171 the chain is on the cytoplasmic side. The helical transmembrane segment at Ile172–Thr192 threads the bilayer. Residues Pro193–Pro209 are Extracellular-facing. The helical transmembrane segment at Ser210–Val230 threads the bilayer. Over Gln231–Lys237 the chain is Cytoplasmic. The chain crosses the membrane as a helical span at residues Val238–Ala258. Topologically, residues Tyr259–Ala288 are extracellular. Residues Trp289–Leu309 form a helical membrane-spanning segment. Residues Gly310–Gln318 lie on the Cytoplasmic side of the membrane. Residues Leu319–Tyr339 form a helical membrane-spanning segment. The Extracellular segment spans residues Leu340–Lys353. Residues Ser354–Ala374 traverse the membrane as a helical segment. The Cytoplasmic portion of the chain corresponds to Ser375–Gln410. The helical transmembrane segment at Val411–Phe431 threads the bilayer. The Extracellular segment spans residues Gln432–Gly442. Residues Ile443–Ile463 traverse the membrane as a helical segment. The Cytoplasmic portion of the chain corresponds to Trp464–Pro469. Residues Phe470–Leu490 form a helical membrane-spanning segment. Residues Ser491 to Gly496 lie on the Extracellular side of the membrane. Residues Gly497–Val517 traverse the membrane as a helical segment. The Cytoplasmic portion of the chain corresponds to His518–Ile747.

Belongs to the HAK/KUP transporter (TC 2.A.72.3) family.

The protein localises to the membrane. Functionally, high-affinity potassium transporter. The sequence is that of Potassium transporter 20 (HAK20) from Oryza sativa subsp. japonica (Rice).